The following is a 238-amino-acid chain: Complement C1q-like protein 4 (238 aa).

Positions 1 to 15 are cleaved as a signal peptide; that stretch reads MVLLLLVAIPLLVHS. The segment at 37-102 is disordered; sequence SRGQGPDGAP…PGPGPGGAAP (66 aa). Residues 53–96 form the Collagen-like domain; sequence PPGAKGEVGRRGKAGLRGPPGPPGPRGPPGEPGRPGPPGPPGPG. The span at 71 to 96 shows a compositional bias: pro residues; sequence PPGPPGPRGPPGEPGRPGPPGPPGPG. A C1q domain is found at 105-238; that stretch reads GYVPRIAFYA…TFSGFIIYPD (134 aa).

In terms of assembly, forms homooligomers, predominantly dimers or trimers. Forms heterooligomers with C1QL1, C1QL2 and C1QL3, when proteins are coexpressed; this interaction does not occur after secretion. Interacts with ADGRB3. In terms of tissue distribution, highly expressed in testis and adipose tissue, brown adipose tissue expressing higher levels than subcutaneous and visceral white adipose tissue. In gonadal fat pad, expressed at lower levels in adipocytes than in the stromal vascular fraction (VSP), which contains preadipocytes, fibroblasts, endothelial cells and occasional immune cells. Expression exhibits sexually dimorphism, with higher levels in females than in males.

It localises to the secreted. May regulate the number of excitatory synapses that are formed on hippocampus neurons. Has no effect on inhibitory synapses. May inhibit adipocyte differentiation at an early stage of the process. The protein is Complement C1q-like protein 4 (C1ql4) of Mus musculus (Mouse).